The sequence spans 254 residues: UPF0246 protein lpp1320 (254 aa).

It belongs to the UPF0246 family.

The chain is UPF0246 protein lpp1320 from Legionella pneumophila (strain Paris).